The following is a 429-amino-acid chain: 28S rRNA (cytosine-C(5))-methyltransferase (429 aa).

Position 2 is an N-acetylglycine (Gly-2). A Phosphoserine modification is found at Ser-167. S-adenosyl-L-methionine-binding positions include 234 to 240 (CAAPGNK), Asp-258, Arg-263, and Asp-305. The active-site Nucleophile is Cys-359.

It belongs to the class I-like SAM-binding methyltransferase superfamily. RsmB/NOP family. As to expression, ubiquitous. Detected in placenta, heart and skeletal muscle.

It is found in the nucleus. The protein resides in the nucleolus. The enzyme catalyses cytidine(3782) in 28S rRNA + S-adenosyl-L-methionine = 5-methylcytidine(3782) in 28S rRNA + S-adenosyl-L-homocysteine + H(+). S-adenosyl-L-methionine-dependent methyltransferase that specifically methylates the C(5) position of cytosine 3782 (m5C3782) in 28S rRNA. m5C3782 promotes protein translation without affecting ribosome biogenesis and fidelity. Required for corpus callosum and cerebral cortex development. The polypeptide is 28S rRNA (cytosine-C(5))-methyltransferase (Homo sapiens (Human)).